Reading from the N-terminus, the 526-residue chain is Adenylosuccinate synthetase (526 aa).

Residues 102 to 108 and 130 to 132 contribute to the GTP site; these read GDEGKGK and GHT. Catalysis depends on D103, which acts as the Proton acceptor. Positions 103 and 130 each coordinate Mg(2+). IMP contacts are provided by residues 103–106, 128–131, T219, R233, N310, T325, and R392; these read DEGK and NAGH. Residue H131 is the Proton donor of the active site. A substrate-binding site is contributed by 388-394; the sequence is TTTGRTR. Residues R394, 420 to 422, and 502 to 504 contribute to the GTP site; these read KVD and GVG.

The protein belongs to the adenylosuccinate synthetase family. Homodimer. Mg(2+) is required as a cofactor.

Its subcellular location is the cytoplasm. It carries out the reaction IMP + L-aspartate + GTP = N(6)-(1,2-dicarboxyethyl)-AMP + GDP + phosphate + 2 H(+). The protein operates within purine metabolism; AMP biosynthesis via de novo pathway; AMP from IMP: step 1/2. Plays an important role in the de novo pathway and in the salvage pathway of purine nucleotide biosynthesis. Catalyzes the first committed step in the biosynthesis of AMP from IMP. This Phaeodactylum tricornutum (strain CCAP 1055/1) protein is Adenylosuccinate synthetase.